Here is a 590-residue protein sequence, read N- to C-terminus: Arginine--tRNA ligase (590 aa).

Positions Pro130–His140 match the 'HIGH' region motif.

It belongs to the class-I aminoacyl-tRNA synthetase family. In terms of assembly, monomer.

Its subcellular location is the cytoplasm. It carries out the reaction tRNA(Arg) + L-arginine + ATP = L-arginyl-tRNA(Arg) + AMP + diphosphate. The chain is Arginine--tRNA ligase from Synechococcus sp. (strain CC9311).